We begin with the raw amino-acid sequence, 859 residues long: MPPAPKNGSAANAWRSERNARPREVWRAIVPKNLMADDTTRRLLAVAGQLQTLLFQIELLKRCDPEVLVKRALRAKIKHNALMVLYLHSRLAGDLAAQAAHRLTVGIYCLWMWLRRACSEAAALANEIDTYATYRDKDRFFSATMNLSPGGTCRLHSLVGLSLYGRTQDVTRELGLINDAENLLKQINYCHLIVSTESAEAALVGVDEFLTATVGGGMVASPETYDHTQPCCICLDELSVTANQGDTIYKRLGYSVCDHLVKQVKVNVTPDDVLRHMPFLNSVDANTLRGAIDKLRGSSGGEVGGGRRLAGVVPTGCRAEVGRSEQEDGAPAGDDRADLEHEARASRILDSYDVFTEAPGPVYRLSELRYWLASGKAAGAKTRGSCAHATHQATVLQKLDTDLSAMFARAETFERECRSAEREIFGTSFAHFHRHVASKIASVRGVGGGGEALIDKLLAGSPATAPEAEIETLISSCYSHHMSLPLFSRLGNPEKADTDALVEILKSYRDQTRPRADKAGGRAEDGAGDCDDEGYPGAADATRRGQRDWIGRVRVDTAAVADEHEDKVKKLLDRAERDLTTRRKNYAERLSARSFSNLDRCVKNQRAELEKLLRVNVYGAALPAMYVELKNGFLARQAFMKAVTSDESQHIRRCRLAREDVEGYEQHQYVRSALMRTSLDPAALPHLASRFYELVSGPMFRRHVERFPQPPNTSLYFTVENVGLLPHLKEELASFTRTYAHAEWMVSEFREFYDFSGISGVSETQRAAYAYIREAVFAAALFESIFQCGRAKLMRADSVEVDAGGPLLTDGIYLTFEERFPLIAIWGVGEDRRLCATSVVVTEKDLYAVLYAVLHKQDK.

The C3H1-type zinc finger occupies 231–259 (CCICLDELSVTANQGDTIYKRLGYSVCDH). Positions 512 to 525 (TRPRADKAGGRAED) are enriched in basic and acidic residues. The interval 512-542 (TRPRADKAGGRAEDGAGDCDDEGYPGAADAT) is disordered. Residue 782–789 (FESIFQCG) participates in ATP binding.

This sequence belongs to the herpesviridae TRM1 protein family. As to quaternary structure, associates with TRM2 and TRM3 to form the tripartite terminase complex. Interacts with portal protein.

The protein localises to the host nucleus. In terms of biological role, component of the molecular motor that translocates viral genomic DNA in empty capsid during DNA packaging. Forms a tripartite terminase complex together with TRM2 and TRM3 in the host cytoplasm. Once the complex reaches the host nucleus, it interacts with the capsid portal vertex. This portal forms a ring in which genomic DNA is translocated into the capsid. TRM1 carries an endonuclease activity that plays an important role for the cleavage of concatemeric viral DNA into unit length genomes. The protein is Tripartite terminase subunit 1 of Amazona oratrix (yellow-headed parrot).